A 225-amino-acid polypeptide reads, in one-letter code: Insulin-induced gene 2 protein (225 aa).

Over 1–28 (MAEGETESPRPKKCGPYISSVTSQSVNV) the chain is Cytoplasmic. Residues 29-51 (VIRGVVLFFIGVFLALVLNLLQI) form a helical membrane-spanning segment. At 52-70 (QRNVTLFPPDVITSIFSSA) the chain is on the lumenal side. A helical membrane pass occupies residues 71–88 (WWVPPCCGTASAVIGLLY). Topologically, residues 89–103 (PCIDRHLGEPHKFKR) are cytoplasmic. The helical transmembrane segment at 104–126 (EWSSVMRCVAVFVGINHASAKVD) threads the bilayer. Over 127 to 129 (FDN) the chain is Lumenal. The chain crosses the membrane as a helical span at residues 130 to 148 (NFQFSLTLAALSVGLWWTF). Residues 149–153 (DRSRS) are Cytoplasmic-facing. Residue Ser151 is modified to Phosphoserine. A helical transmembrane segment spans residues 154-175 (GFGLGVGIAFLATVVTQLLVYN). Residues 176-189 (GVYQYTSPDFLYVR) lie on the Lumenal side of the membrane. A helical membrane pass occupies residues 190-207 (SWLPCIFFAGGITMGNIG). Topologically, residues 208-225 (RQLAMYECKVIAEKSHQE) are cytoplasmic. The residue at position 215 (Cys215) is a Cysteine sulfenic acid (-SOH); alternate. A Glycyl cysteine thioester (Cys-Gly) (interchain with G-Cter in ubiquitin); alternate cross-link involves residue Cys215. The KxHxx signature appears at 219 to 225 (AEKSHQE).

This sequence belongs to the INSIG family. As to quaternary structure, interacts with SCAP; interaction is direct and only takes place in the presence of sterols; it prevents interaction between SCAP and the coat protein complex II (COPII). Associates with the SCAP-SREBP complex (composed of SCAP and SREBF1/SREBP1 or SREBF2/SREBP2); association is mediated via its interaction with SCAP and only takes place in the presence of sterols. Interacts with RNF139. Interacts with RNF145. Post-translationally, phosphorylation at Ser-151 by PCK1 reduces binding to oxysterol, disrupting the interaction between INSIG2 and SCAP, thereby promoting nuclear translocation of SREBP proteins (SREBF1/SREBP1 or SREBF2/SREBP2) and subsequent transcription of downstream lipogenesis-related genes. In terms of processing, polyubiquitinated by AMFR/gp78 at Cys-215 in some tissues such as adipose tissues, undifferentiated myoblasts and liver, leading to its degradation. In differentiated myotubes, Cys-215 oxidation prevents ubiquitination at the same site, resulting in protein stabilization. Oxidized at Cys-215 in differentiated myotubes, preventing ubiquitination at the same site, and resulting in protein stabilization. Expressed in liver, testis, kidney, spleen, intestine, brain and adrenal gland.

It localises to the endoplasmic reticulum membrane. Oxysterol-binding protein that mediates feedback control of cholesterol synthesis by controlling both endoplasmic reticulum to Golgi transport of SCAP and degradation of HMGCR. Acts as a negative regulator of cholesterol biosynthesis by mediating the retention of the SCAP-SREBP complex in the endoplasmic reticulum, thereby blocking the processing of sterol regulatory element-binding proteins (SREBPs) SREBF1/SREBP1 and SREBF2/SREBP2. Binds oxysterol, including 22-hydroxycholesterol, 24-hydroxycholesterol, 25-hydroxycholesterol and 27-hydroxycholesterol, regulating interaction with SCAP and retention of the SCAP-SREBP complex in the endoplasmic reticulum. In presence of oxysterol, interacts with SCAP, retaining the SCAP-SREBP complex in the endoplasmic reticulum, thereby preventing SCAP from escorting SREBF1/SREBP1 and SREBF2/SREBP2 to the Golgi. Sterol deprivation or phosphorylation by PCK1 reduce oxysterol-binding, disrupting the interaction between INSIG2 and SCAP, thereby promoting Golgi transport of the SCAP-SREBP complex, followed by processing and nuclear translocation of SREBF1/SREBP1 and SREBF2/SREBP2. Also regulates cholesterol synthesis by regulating degradation of HMGCR: initiates the sterol-mediated ubiquitin-mediated endoplasmic reticulum-associated degradation (ERAD) of HMGCR via recruitment of the reductase to the ubiquitin ligase RNF139. In Mus musculus (Mouse), this protein is Insulin-induced gene 2 protein.